Consider the following 394-residue polypeptide: MWTNTFKWCSKTEKETTTADAKVCASVQGLKALQQQIMDSTTVRGSVNNTMTPGGINQWHFHNKRANKVCTPTVLIHGYAASSMAFYRTFENLSDNIKDLYAIDLPANGASEAPALQVNKTKKIKSLRFKHIEDDVVIPVIEKRPPAEDIKSHLEQYESYFVDRIEQWRKDNKLRKINVVGHSFGGYISFKYALKYPDSIEKLCLISPLGVENSIHAITHKWEPNTTYPLTFTDPSSRYYTRKLNVPRFIFENQLNVLKWMGPIGSKLCSNYISTAYVKVPDQIYKDYLLHSFVGKNQTVQPQTIKVFTHLFERNLIARDPIINNVRFLNPATPVMFMYGEHDWMDKYAGYLTTESMLKNKAKASYVEVPDAGHNLFLDNPQHFASSLVSFLSK.

An AB hydrolase-1 domain is found at 74–381; that stretch reads VLIHGYAASS…AGHNLFLDNP (308 aa). The HXXXXD motif motif lies at 374 to 379; the sequence is HNLFLD.

Belongs to the peptidase S33 family. ABHD4/ABHD5 subfamily.

It carries out the reaction a 1-acyl-sn-glycero-3-phosphate + an acyl-CoA = a 1,2-diacyl-sn-glycero-3-phosphate + CoA. Lysophosphatidic acid acyltransferase involved in membrane remodeling leading to increased organic solvent tolerance. Involved in resistance to azoles and copper. The polypeptide is 1-acylglycerol-3-phosphate O-acyltransferase ICT1 (ICT1) (Saccharomyces cerevisiae (strain ATCC 204508 / S288c) (Baker's yeast)).